The chain runs to 163 residues: MEQNDLGLIEKIVYLNRVAKVVKGGRRFSFSALVVVGDGKGQVGFGLGKANEVPEAIRKASEKARKEMISVPLLDGTLPYEVLGRYGAGRVMLKPASKGTGIIAGGPVRAVLEVVGVHDILTKAIGTNNPHNVLRATIAGLASLRSADEVGQLRGKKVVTPRK.

One can recognise an S5 DRBM domain in the interval 8 to 71; the sequence is LIEKIVYLNR…EKARKEMISV (64 aa).

This sequence belongs to the universal ribosomal protein uS5 family. As to quaternary structure, part of the 30S ribosomal subunit. Contacts proteins S4 and S8.

With S4 and S12 plays an important role in translational accuracy. Functionally, located at the back of the 30S subunit body where it stabilizes the conformation of the head with respect to the body. In Maridesulfovibrio salexigens (strain ATCC 14822 / DSM 2638 / NCIMB 8403 / VKM B-1763) (Desulfovibrio salexigens), this protein is Small ribosomal subunit protein uS5.